Reading from the N-terminus, the 117-residue chain is Toxin CSTX-8 (117 aa).

Residues 1-20 (MKVLVICAVLFLAIFSNSSA) form the signal peptide. Residues 21–47 (ETEDDFLEDESFQADDVIPFLASEQVR) constitute a propeptide that is removed on maturation. 4 cysteine pairs are disulfide-bonded: Cys50–Cys65, Cys57–Cys74, Cys64–Cys95, and Cys76–Cys93. The propeptide occupies 82 to 87 (RSETDR). Thr116 is subject to Threonine amide.

This sequence belongs to the neurotoxin 19 (CSTX) family. 12 subfamily. In terms of assembly, heterodimer of A and B chains; disulfide-linked. Interacts with CSTX-1 (AC P81694), and with CSTX-9 (AC P58604). As to expression, expressed by the venom gland.

It localises to the secreted. The protein localises to the target cell membrane. Synergistic toxin that induces or increases a cytolytic effect when combined with CSTX-1 (AC P81694) or CSTX-9 (AC P58604). When alone, has a weak insecticidal activity, with an unknown molecular target. This chain is Toxin CSTX-8, found in Cupiennius salei (American wandering spider).